The chain runs to 749 residues: MDEATQRQDPIEETDAEKKVQVVPSLWGRLVSNHPESRHIDLIEHSIFFGRNPKRCQVVLHDPTVSGIHCRIFREEIPCQKYNNNNNNDGDNNNNNNNNNNNNNNNNNNNNNNNNNNNNNNNNNNNTTKNYITKITDTSSNGTFVKGCILGKDKTTIIQNGDMVSFTSAKLISSLSFTFLDLTNPYIDEPFEEEMNKKYSIQGILGTGNFSVVKRCIRRDTGEVFAVKIIDKKKFWSQTKTRRQMESEVEILQKIKHPNIISIIDIVQSDRYFYIVLELATGGELFEKIKQKGRFSEPEAKDTFKQILEAVSYLHDLNISHRDLKPENILISAVSHGKSSVIKVTDFGLAKIIGEKEMATTLCGTPLYVAPEIIRNCLHGDGGAQVNTGYGKEVDVWSLGCILYILLSGRPPFDFDHTNNFNLKLINQGLYNFSLPVWDVVTENAKDLIKKLLNVDPTKRISTKGALSHDWFNDDDLLRCSTVIANQSPISKSPQRSHGVVQLPVVDVKSKNIPMTLNSTTTNTTSPNNNNNNNNNNNNKNNNKNIIKSLNSNSNNYNNNSVLKKTSQSPKTKSNRPKLQFEQPSPNQHNNNNNNNNNNNNNNNNNNNNNNSSGGKPAIINNNGNLYSKFMATNNDPFDCTPTSTPVKPITNSTTTSTATSMPTSNSVTMGTSSTSIPVSNSITMKSPSILALSDDGDKKRKEKESSSSENVNDVIVINSNNHNNNNNNNHNINNGISSKPPPKRLKGS.

Residues 47-150 enclose the FHA domain; sequence IFFGRNPKRC…NGTFVKGCIL (104 aa). The segment covering 84 to 126 has biased composition (low complexity); the sequence is NNNNNDGDNNNNNNNNNNNNNNNNNNNNNNNNNNNNNNNNNNN. A disordered region spans residues 84-130; sequence NNNNNDGDNNNNNNNNNNNNNNNNNNNNNNNNNNNNNNNNNNNTTKN. In terms of domain architecture, Protein kinase spans 199–472; that stretch reads YSIQGILGTG…TKGALSHDWF (274 aa). ATP-binding positions include 205–213 and lysine 228; that span reads LGTGNFSVV. The active-site Proton acceptor is the aspartate 323. Disordered stretches follow at residues 512 to 620 and 640 to 749; these read NIPM…PAII and CTPT…LKGS. Positions 516–561 are enriched in low complexity; the sequence is TLNSTTTNTTSPNNNNNNNNNNNNKNNNKNIIKSLNSNSNNYNNNS. The segment covering 562–572 has biased composition (polar residues); the sequence is VLKKTSQSPKT. 2 stretches are compositionally biased toward low complexity: residues 590 to 611 and 651 to 667; these read NNNNNNNNNNNNNNNNNNNNNN and TNSTTTSTATSMPTSNS. Residues 668–687 are compositionally biased toward polar residues; sequence VTMGTSSTSIPVSNSITMKS. Over residues 696 to 707 the composition is skewed to basic and acidic residues; sequence DGDKKRKEKESS. Over residues 708 to 739 the composition is skewed to low complexity; sequence SSENVNDVIVINSNNHNNNNNNNHNINNGISS.

This sequence belongs to the protein kinase superfamily. CAMK Ser/Thr protein kinase family. CHK2 subfamily.

The enzyme catalyses L-seryl-[protein] + ATP = O-phospho-L-seryl-[protein] + ADP + H(+). It carries out the reaction L-threonyl-[protein] + ATP = O-phospho-L-threonyl-[protein] + ADP + H(+). The chain is Probable serine/threonine-protein kinase fhkD (fhkD) from Dictyostelium discoideum (Social amoeba).